A 137-amino-acid polypeptide reads, in one-letter code: Ribosomal RNA small subunit methyltransferase G (137 aa).

Residues Gly-75, Phe-80, and 126-127 (AE) contribute to the S-adenosyl-L-methionine site.

It belongs to the methyltransferase superfamily. RNA methyltransferase RsmG family.

Its subcellular location is the cytoplasm. In terms of biological role, specifically methylates the N7 position of a guanine in 16S rRNA. This chain is Ribosomal RNA small subunit methyltransferase G, found in Mycoplasma mycoides subsp. mycoides SC (strain CCUG 32753 / NCTC 10114 / PG1).